The primary structure comprises 329 residues: Fructose-1,6-bisphosphatase class 1 (329 aa).

Residues glutamate 84, aspartate 103, leucine 105, and aspartate 106 each contribute to the Mg(2+) site. Residues 106–109 (DGSS), asparagine 196, and lysine 262 contribute to the substrate site. Glutamate 268 provides a ligand contact to Mg(2+).

Belongs to the FBPase class 1 family. As to quaternary structure, homotetramer. It depends on Mg(2+) as a cofactor.

The protein localises to the cytoplasm. The catalysed reaction is beta-D-fructose 1,6-bisphosphate + H2O = beta-D-fructose 6-phosphate + phosphate. The protein operates within carbohydrate biosynthesis; gluconeogenesis. This chain is Fructose-1,6-bisphosphatase class 1, found in Shewanella sediminis (strain HAW-EB3).